The sequence spans 805 residues: Transmembrane channel-like protein 6 (805 aa).

The tract at residues 1–29 (MAQPLAFILDVPETPGDQGQGPSPYDESE) is disordered. Residues 1-209 (MAQPLAFILD…SCCGRLRYAC (209 aa)) are Lumenal-facing. Thr-89 bears the Phosphothreonine mark. Arg-94 carries the omega-N-methylarginine modification. Asn-103 is a glycosylation site (N-linked (GlcNAc...) asparagine). At Thr-105 the chain carries Phosphothreonine. Residues 210–230 (VLALHSLGLALLSALQALMPW) form a helical membrane-spanning segment. Over 231 to 249 (RYALKRIGGQFGSSVLSYF) the chain is Cytoplasmic. Residues 250–270 (LFLKTLLAFNALLLLLLVAFI) traverse the membrane as a helical segment. At 271–338 (MGPQVAFPPA…TPRVGGLPYN (68 aa)) the chain is on the lumenal side. A glycan (N-linked (GlcNAc...) asparagine) is linked at Asn-312. Residues 339-359 (MPLAYLSTVGVSFFITCITLV) traverse the membrane as a helical segment. Topologically, residues 360–431 (YSMAHSFGES…RSVCGRLRQA (72 aa)) are cytoplasmic. The helical transmembrane segment at 432-452 (AVLGLVWLLCLGTALGCAVAV) threads the bilayer. Over 453–469 (HVFSEFMIQSPEAAGQE) the chain is Lumenal. The helical transmembrane segment at 470 to 490 (AVLLVLPLVVGLLNLGAPYLC) threads the bilayer. Residues 491–505 (RVLAALEPHDSPVLE) lie on the Cytoplasmic side of the membrane. A helical membrane pass occupies residues 506–526 (VYVAICRNLILKLAILGTLCY). Residues 527–553 (HWLGRRVGVLQGQCWEDFVGQELYRFL) are Lumenal-facing. The helical transmembrane segment at 554 to 574 (VMDFVLMLLDTLFGELVWRII) threads the bilayer. At 575-604 (SEKKLKRRRKPEFDIARNVLELIYGQTLTW) the chain is on the cytoplasmic side. Residues 605–625 (LGVLFSPLLPAVQIIKLLLVF) form a helical membrane-spanning segment. Over 626–650 (YVKKTSLLANCQAPRRPWLASHMST) the chain is Lumenal. Residues 651–671 (VFLTLLCFPAFLGAAVFLCYA) traverse the membrane as a helical segment. Residues 672–722 (VWQVKPSSTCGPFRTLDTMYEAGRVWVRHLEAAGPRVSWLPWVHRYLMENT) lie on the Cytoplasmic side of the membrane. Residues 723-743 (FFVFLVSALLLAVIYLNIQVV) form a helical membrane-spanning segment. At 744 to 805 (RGQRKVICLL…PALLTDEQDA (62 aa)) the chain is on the lumenal side. The tract at residues 778-805 (KEREERSRVGTTEEAAAPPALLTDEQDA) is disordered.

This sequence belongs to the TMC family. Interacts with TMC8. Interacts and forms a complex with TMC8 and CIB1; the interaction stabilizes each component of the complex. Interacts and forms a complex with TMC8 and SLC30A1/ZNT1; the interaction regulates zinc transport into the ER. In terms of assembly, (Microbial infection) Interacts with human papillomavirus 16/HPV16 protein E5; the interaction alleviates TMC6-mediated transcription factors inhibition. In terms of tissue distribution, expressed in placenta, prostate, testis, activated T-lymphocytes and lymphokine-activated killer (LAK) lymphocytes.

Its subcellular location is the endoplasmic reticulum membrane. It localises to the golgi apparatus membrane. The protein localises to the nucleus membrane. Its function is as follows. Acts as a regulatory protein involved in the regulation of numerous cellular processes. Together with its homolog TMC8/EVER2, forms a complex with CIB1 in lymphocytes and keratynocytes where TMC6 and TMC8 stabilize CIB1 and reciprocally. Together with TMC8, also forms a complex with and activates zinc transporter ZNT1 at the ER membrane of keratynocytes, thereby facilitating zinc uptake into the ER. Down-regulates the activity of transcription factors induced by zinc and cytokines. Also plays a role in thermal sensation by inhibiting the M-channel (KCNQ2-KCNQ3 channel) current in primary sensory neurons. The chain is Transmembrane channel-like protein 6 from Homo sapiens (Human).